Reading from the N-terminus, the 1171-residue chain is Zinc finger BED domain-containing protein 4 (1171 aa).

The interval 25-62 (EEEDDDGIPPDSLERMDFKSEQEDMKQTDSGGERAGLG) is disordered. Positions 36-51 (SLERMDFKSEQEDMKQ) are enriched in basic and acidic residues. Lys-43 participates in a covalent cross-link: Glycyl lysine isopeptide (Lys-Gly) (interchain with G-Cter in SUMO2). 2 consecutive BED-type zinc fingers follow at residues 115-172 (RKKS…LIQE) and 285-342 (RRRS…VLQE). Zn(2+) is bound by residues Cys-136, Cys-139, His-160, His-165, Cys-306, Cys-309, His-330, and His-335. The span at 362–385 (LLPPEGELSSVSSSPVKPVRESPS) shows a compositional bias: low complexity. The tract at residues 362 to 405 (LLPPEGELSSVSSSPVKPVRESPSASSSPDRLTEDLQSHLNPGD) is disordered. 2 BED-type zinc fingers span residues 456 to 512 (RLKS…VGSQ) and 558 to 615 (KKTS…LKTE). Residues Cys-477 and Cys-480 each coordinate Zn(2+). Lys-489 participates in a covalent cross-link: Glycyl lysine isopeptide (Lys-Gly) (interchain with G-Cter in SUMO2). Zn(2+) is bound by residues His-500, His-505, Cys-579, Cys-582, His-603, and His-608. Residues 614–640 (TEVSETARPSSPDTRVPRGTELSGASS) form a disordered region. Ser-624 is modified (phosphoserine). The tract at residues 1086–1171 (LAYLEEEVLE…VNLPLIYFQY (86 aa)) is required for homodimerization and nuclear accumulation.

In terms of assembly, homodimer; via C-terminus. Interacts with MYH9. Interacts with SAFB/SAFB1. In terms of tissue distribution, expressed in testis, heart, lung, and weakly expressed in brain, liver, muscle, placenta and small intestine. Expressed in the retina, found in the cone photoreceptors, Mueller cells, cone pedicles and in the innermost retinal layer.

The protein localises to the nucleus. The protein resides in the cytoplasm. It is found in the photoreceptor inner segment. Functionally, transcriptional regulator that binds to poly-guanine tracts in gene promoters and activates transcription. Able to bind single- and double-stranded DNA and RNA. In Homo sapiens (Human), this protein is Zinc finger BED domain-containing protein 4 (ZBED4).